Here is a 495-residue protein sequence, read N- to C-terminus: uncharacterized protein (495 aa).

FAD contacts are provided by S16, E36, W45, D56, Y62, and V105.

Belongs to the FAD-binding monooxygenase family. The cofactor is FAD.

This is an uncharacterized protein from Mycobacterium tuberculosis (strain CDC 1551 / Oshkosh).